Here is a 445-residue protein sequence, read N- to C-terminus: FAD-dependent monooxygenase sorC (445 aa).

The helical transmembrane segment at 8–28 (PFEVAIVGGGITGLALAVGLL) threads the bilayer. Asn31 is a glycosylation site (N-linked (GlcNAc...) asparagine). The FAD site is built by Glu38 and Arg119. Arg201 is an active-site residue. FAD is bound by residues Asp323 and Ala336. The N-linked (GlcNAc...) asparagine glycan is linked to Asn358.

It belongs to the paxM FAD-dependent monooxygenase family. FAD serves as cofactor.

It is found in the membrane. Its pathway is secondary metabolite biosynthesis. Functionally, FAD-dependent monooxygenase; part of the gene cluster that mediates the biosynthesis of sorbicillinoids, a diverse group of yellow secondary metabolites that restrict growth of competing pathogenic fungi but not of bacteria. Sorbicillinoids biosynthesis requires the action of two PKSs. SorA iteratively combines three acetyl units and the growing chain is modified by the ketoacyl reductase subunit, and optional by the enoyl reductase subunit in the second cycle. The polyketide is then handed over to the PKS SorB, which adds three more acetyl units, and two methyl groups. SorB releases an aldehyde, which undergoes spontaneous cyclization resulting in the formation of sorbicillin or 2',3'-dihydrosorbicillin. The monooxygenase sorC oxidizes sorbicillin and 2',3'-dihydrosorbicillin to 2',3'-dihydrosorbicillinol and sorbicillinol, respectively. The oxidoreductase sorD further converts sorbicillinol into oxosorbicillinol. Sorbicillinol is the building block for the other sorbicillinoids such as disorbicillinol, bisvertinolon, and dihydrobisvertinolone. This Penicillium rubens (strain ATCC 28089 / DSM 1075 / NRRL 1951 / Wisconsin 54-1255) (Penicillium chrysogenum) protein is FAD-dependent monooxygenase sorC.